The sequence spans 161 residues: Small ribosomal subunit protein uS9 (161 aa).

The protein belongs to the universal ribosomal protein uS9 family.

The sequence is that of Small ribosomal subunit protein uS9 from Bartonella tribocorum (strain CIP 105476 / IBS 506).